The sequence spans 231 residues: MAQDIIDGINPTRMELLSLKNRTKLAVKGHGLLKEKRDALIKEFFDILDRVKGVREAAERSLKEANEALLEAQIAMGDLAVRKASLSVKESIDVDIKSRSVMGVSVPVTNVKMEERSIIDRGYSFSDTTIQLDEAAKKFEESIKFLIELGEVEKTIFLLAEEIEATKRRVNALEHIMIPRFENTEKYIDMRLQEMERENFVRLKMIRSTIEKKDNEAKEAAIEEEAAEVEA.

Belongs to the V-ATPase D subunit family. As to quaternary structure, has multiple subunits with at least A(3), B(3), C, D, E, F, H, I and proteolipid K(x).

It is found in the cell membrane. In terms of biological role, component of the A-type ATP synthase that produces ATP from ADP in the presence of a proton gradient across the membrane. This is A-type ATP synthase subunit D from Methanobrevibacter smithii (strain ATCC 35061 / DSM 861 / OCM 144 / PS).